The following is a 141-amino-acid chain: Nucleoside diphosphate kinase (141 aa).

Lysine 11, tyrosine 59, arginine 87, threonine 93, arginine 104, and asparagine 114 together coordinate ATP. The active-site Pros-phosphohistidine intermediate is the histidine 117.

Belongs to the NDK family. Homotetramer. Mg(2+) serves as cofactor.

The protein localises to the cytoplasm. The enzyme catalyses a 2'-deoxyribonucleoside 5'-diphosphate + ATP = a 2'-deoxyribonucleoside 5'-triphosphate + ADP. It carries out the reaction a ribonucleoside 5'-diphosphate + ATP = a ribonucleoside 5'-triphosphate + ADP. Major role in the synthesis of nucleoside triphosphates other than ATP. The ATP gamma phosphate is transferred to the NDP beta phosphate via a ping-pong mechanism, using a phosphorylated active-site intermediate. This Orientia tsutsugamushi (strain Boryong) (Rickettsia tsutsugamushi) protein is Nucleoside diphosphate kinase.